Here is a 78-residue protein sequence, read N- to C-terminus: MSKVCIVTGKRPATGNNVSHAQNKTRRRFLPNLHTHRFWVESENKYIKLKVSSKGMRIIDKKGIDTVLSDLRAQGHKI.

Belongs to the bacterial ribosomal protein bL28 family.

The polypeptide is Large ribosomal subunit protein bL28 (Francisella philomiragia subsp. philomiragia (strain ATCC 25017 / CCUG 19701 / FSC 153 / O#319-036)).